The following is a 120-amino-acid chain: MITKADKNATRKKRHARVRAKLTGTAERPRLNVFRSNQHIYAQVIDDVNGVTLVSASTLDKDLALNGTSNIEAATKVGESVAKRAVEKGVKEVVFDRGGYLYHGRVKALAEAAREAGLQF.

Belongs to the universal ribosomal protein uL18 family. As to quaternary structure, part of the 50S ribosomal subunit; part of the 5S rRNA/L5/L18/L25 subcomplex. Contacts the 5S and 23S rRNAs.

In terms of biological role, this is one of the proteins that bind and probably mediate the attachment of the 5S RNA into the large ribosomal subunit, where it forms part of the central protuberance. This Bacillus cereus (strain ATCC 10987 / NRS 248) protein is Large ribosomal subunit protein uL18.